A 326-amino-acid chain; its full sequence is Aspartate carbamoyltransferase catalytic subunit (326 aa).

The carbamoyl phosphate site is built by Arg-65 and Thr-66. Lys-93 lines the L-aspartate pocket. Positions 115, 143, and 146 each coordinate carbamoyl phosphate. L-aspartate-binding residues include Arg-176 and Arg-230. The carbamoyl phosphate site is built by Gly-271 and Pro-272.

It belongs to the aspartate/ornithine carbamoyltransferase superfamily. ATCase family. In terms of assembly, heterododecamer (2C3:3R2) of six catalytic PyrB chains organized as two trimers (C3), and six regulatory PyrI chains organized as three dimers (R2).

It catalyses the reaction carbamoyl phosphate + L-aspartate = N-carbamoyl-L-aspartate + phosphate + H(+). It participates in pyrimidine metabolism; UMP biosynthesis via de novo pathway; (S)-dihydroorotate from bicarbonate: step 2/3. Catalyzes the condensation of carbamoyl phosphate and aspartate to form carbamoyl aspartate and inorganic phosphate, the committed step in the de novo pyrimidine nucleotide biosynthesis pathway. This chain is Aspartate carbamoyltransferase catalytic subunit, found in Mesorhizobium japonicum (strain LMG 29417 / CECT 9101 / MAFF 303099) (Mesorhizobium loti (strain MAFF 303099)).